The primary structure comprises 82 residues: MEIPKLLYIAVIAIGLSGSLTCATPLANPLADPEAEAEAKATAEATAEAIAEALAEPEPGLPILALFVTIPFIHHYLMEKLG.

A signal peptide spans Met-1 to Ala-23. A propeptide spanning residues Thr-24 to Pro-59 is cleaved from the precursor. Position 81 is a leucine amide (Leu-81).

Belongs to the formicidae venom clade 1 family. In terms of tissue distribution, expressed by the venom gland.

Its subcellular location is the secreted. Its function is as follows. Toxin that causes a slowly developing temporary paralysis when intrathoracically injected into insects (blowflies). Does not cause spontaneous nocifensive behaviors by intraplantar injection in mice. The polypeptide is Myrmicitoxin(1)-Pm3a (Pogonomyrmex maricopa (Maricopa harvester ant)).